The following is a 93-amino-acid chain: Aspartyl/glutamyl-tRNA(Asn/Gln) amidotransferase subunit C (93 aa).

It belongs to the GatC family. In terms of assembly, heterotrimer of A, B and C subunits.

The enzyme catalyses L-glutamyl-tRNA(Gln) + L-glutamine + ATP + H2O = L-glutaminyl-tRNA(Gln) + L-glutamate + ADP + phosphate + H(+). It catalyses the reaction L-aspartyl-tRNA(Asn) + L-glutamine + ATP + H2O = L-asparaginyl-tRNA(Asn) + L-glutamate + ADP + phosphate + 2 H(+). Functionally, allows the formation of correctly charged Asn-tRNA(Asn) or Gln-tRNA(Gln) through the transamidation of misacylated Asp-tRNA(Asn) or Glu-tRNA(Gln) in organisms which lack either or both of asparaginyl-tRNA or glutaminyl-tRNA synthetases. The reaction takes place in the presence of glutamine and ATP through an activated phospho-Asp-tRNA(Asn) or phospho-Glu-tRNA(Gln). The sequence is that of Aspartyl/glutamyl-tRNA(Asn/Gln) amidotransferase subunit C from Methanocella arvoryzae (strain DSM 22066 / NBRC 105507 / MRE50).